The sequence spans 128 residues: Aspartate 1-decarboxylase (128 aa).

Ser-25 acts as the Schiff-base intermediate with substrate; via pyruvic acid in catalysis. The residue at position 25 (Ser-25) is a Pyruvic acid (Ser). Thr-57 lines the substrate pocket. Tyr-58 (proton donor) is an active-site residue. Residue 73-75 participates in substrate binding; that stretch reads GAA.

It belongs to the PanD family. As to quaternary structure, heterooctamer of four alpha and four beta subunits. Pyruvate serves as cofactor. Is synthesized initially as an inactive proenzyme, which is activated by self-cleavage at a specific serine bond to produce a beta-subunit with a hydroxyl group at its C-terminus and an alpha-subunit with a pyruvoyl group at its N-terminus.

It is found in the cytoplasm. The catalysed reaction is L-aspartate + H(+) = beta-alanine + CO2. It participates in cofactor biosynthesis; (R)-pantothenate biosynthesis; beta-alanine from L-aspartate: step 1/1. Functionally, catalyzes the pyruvoyl-dependent decarboxylation of aspartate to produce beta-alanine. The sequence is that of Aspartate 1-decarboxylase from Chlorobium luteolum (strain DSM 273 / BCRC 81028 / 2530) (Pelodictyon luteolum).